The following is a 396-amino-acid chain: Exodeoxyribonuclease 7 large subunit (396 aa).

It belongs to the XseA family. Heterooligomer composed of large and small subunits.

The protein localises to the cytoplasm. The catalysed reaction is Exonucleolytic cleavage in either 5'- to 3'- or 3'- to 5'-direction to yield nucleoside 5'-phosphates.. Its function is as follows. Bidirectionally degrades single-stranded DNA into large acid-insoluble oligonucleotides, which are then degraded further into small acid-soluble oligonucleotides. The protein is Exodeoxyribonuclease 7 large subunit of Clostridium tetani (strain Massachusetts / E88).